A 470-amino-acid chain; its full sequence is MMRENPELLLGQVLGDSLRFVSIIGAGAYGVVYKAEDIYDGTLYAVKALCKDGLNEKQKKLQARELALHARVSSHPYIITLHRVLETEDAIYVVLQYCPNGDLFTYITEKKVYQGNSHLIKTVFLQLISAVEHCHSVGIYHRDLKPENIMVGNDVNTVYLADFGLATTEPYSSDFGCGSLFYMSPECQREVKKLSSLSDMLPVTPEPIESQSSSFATAPNDVWALGIILINLCCKRNPWKRACSQTDGTYRSYVHNPSTLLSILPISRELNSLLNRIFDRNPKTRITLPELSTLVSNCKNLTRRLRPAPLVSSRYLAYQQQQQQQQMNLQQGIQGYPHQGYMPTQNIGFPWPPTPQFVSNWNHCATPTIPVSLQVLTPNSSLKVDPTTPLTAPIHATESFWPSAAAAAAAVHNNANSYMPITPTPYPNNAKIFGYPNQPPLTPIPFTGFVLHPAPVGRAADAVDPSRKSL.

In terms of domain architecture, Protein kinase spans 18–295 (LRFVSIIGAG…ITLPELSTLV (278 aa)). Residues 24–32 (IGAGAYGVV) and lysine 47 contribute to the ATP site. The active-site Proton acceptor is aspartate 143. Serine 469 carries the post-translational modification Phosphoserine.

This sequence belongs to the protein kinase superfamily. Ser/Thr protein kinase family.

It carries out the reaction L-seryl-[protein] + ATP = O-phospho-L-seryl-[protein] + ADP + H(+). It catalyses the reaction L-threonyl-[protein] + ATP = O-phospho-L-threonyl-[protein] + ADP + H(+). In terms of biological role, this protein is a negative regulator of both sexual conjugation and meiosis. It phosphorylates mei2. It blocks the onset of meiosis until conjugation takes place. The chain is Negative regulator of sexual conjugation and meiosis (ran1) from Schizosaccharomyces pombe (strain 972 / ATCC 24843) (Fission yeast).